The primary structure comprises 244 residues: MAKTYTPEEAEALVHSHDPEHPANLICDLCREFYKLGWVTGTGGGISIRKDDVVYLAPSGVQKERIKPEHIFVLPFAQSSVPKPGSKRDFIRIPSKKGLNESQCTPLFWNAFTMREAGACIHTHSQHAVLLTLLLPRDAPSFRISHQEMIKGVRLGGVGKTLKFFETLEVPIIDNTAFEEDLTEGMAAAMARYPDAPAILVRRHGVYVWGNTWEQAKTQAECLDYLFEIACKMIQNKIPLEGDT.

Cys104 serves as a coordination point for substrate. His122 and His124 together coordinate Zn(2+). Residue Glu148 is the Proton donor/acceptor of the active site. His204 is a Zn(2+) binding site.

It belongs to the aldolase class II family. MtnB subfamily. The cofactor is Zn(2+).

The protein resides in the cytoplasm. It carries out the reaction 5-(methylsulfanyl)-D-ribulose 1-phosphate = 5-methylsulfanyl-2,3-dioxopentyl phosphate + H2O. It participates in amino-acid biosynthesis; L-methionine biosynthesis via salvage pathway; L-methionine from S-methyl-5-thio-alpha-D-ribose 1-phosphate: step 2/6. Functionally, catalyzes the dehydration of methylthioribulose-1-phosphate (MTRu-1-P) into 2,3-diketo-5-methylthiopentyl-1-phosphate (DK-MTP-1-P). This Cryptococcus neoformans var. neoformans serotype D (strain B-3501A) (Filobasidiella neoformans) protein is Methylthioribulose-1-phosphate dehydratase.